A 473-amino-acid chain; its full sequence is Lipid A galacturonosyltransferase RgtD (473 aa).

10 helical membrane passes run 6 to 26, 68 to 88, 94 to 114, 118 to 138, 160 to 180, 190 to 210, 238 to 258, 271 to 291, 295 to 315, and 327 to 347; these read GLLI…FDAT, AIYW…LVLM, FVGP…PGVA, VFFS…LAYF, FLTK…LLLI, VIIA…WNLQ, FFAA…LWAV, KMLV…ATVA, ANWA…LLYL, and INGI…QLLL.

It localises to the cell membrane. Its pathway is bacterial outer membrane biogenesis; LPS lipid A biosynthesis. Involved in the modification of the lipopolysaccharide (LPS) lipid A moiety. Catalyzes the transfer of a galacturonic acid (GalA) residue to the 4'-position of 4'-dephosphorylated lipid A, using dodecaprenyl phosphate-GalA as the donor substrate. Acts before the other GalA transferases RgtA, RgtB and RgtC. The sequence is that of Lipid A galacturonosyltransferase RgtD from Rhizobium johnstonii (strain DSM 114642 / LMG 32736 / 3841) (Rhizobium leguminosarum bv. viciae).